The following is a 103-amino-acid chain: UPF0134 protein MPN_484 (103 aa).

It belongs to the UPF0134 family.

The sequence is that of UPF0134 protein MPN_484 from Mycoplasma pneumoniae (strain ATCC 29342 / M129 / Subtype 1) (Mycoplasmoides pneumoniae).